A 640-amino-acid chain; its full sequence is Preterminal protein (640 aa).

Residues 232–257 (PSQEGEGEERENPDRASSRPRPQETV) form a disordered region. Positions 351 to 360 (RLPVRRRRRR) match the Nuclear localization signal motif. Ser549 carries the O-(5'-phospho-DNA)-serine modification. The disordered stretch occupies residues 614–640 (GADVPLPAMPPGPEPPLPPGARPRHRF). Residues 620-634 (PAMPPGPEPPLPPGA) are compositionally biased toward pro residues.

Belongs to the adenoviridae terminal protein family. As to quaternary structure, heterodimer with the polymerase; this heterodimer binds to bp 9 to 18 of the genome. Interacts with host POU2F1; POU2F1 binds to the auxiliary sequences in the inverted terminal repeats and tethers the pTP-POL heterodimer to the origin DNA thereby participating in the assembly of the pre-initiation complex (POL-TP-DBP-NFIA-POU2F1). Post-translationally, preterminal protein is used to replicate viral genome, upon genomic encapsidation it is processed first into iTP and finally into TP by adenovirus protease.

Its subcellular location is the host nucleus matrix. Its function is as follows. Protein covalently bound to the viral DNA that acts as a primer for viral genomic replication by DNA strand displacement. Assembles on the viral origin of replication in an initiation complex with viral polymerase, DBP, host NFIA and host POU2F1/OCT1. During initiation, the polymerase covalently couples the first dCTP with Ser-580 of pTP. The terminal protein stimulates the template activity over 20 fold compared to protein-free templates. Neo-synthesized viral genomes are linked to two preterminal proteins, one for each 5' end. These new genomes are encapsidated in the nucleus, and during capsid maturation by viral protease, preterminal protein is first cleaved into intermediary (iTP), then into mature TP. May play a role in host nuclear matrix localization of genomic DNA. This is Preterminal protein from Human adenovirus B serotype 7 (HAdV-7).